Here is a 577-residue protein sequence, read N- to C-terminus: Aspartate--tRNA(Asp/Asn) ligase (577 aa).

Glu-171 serves as a coordination point for L-aspartate. Residues 195 to 198 (QLFK) are aspartate. Arg-217 contributes to the L-aspartate binding site. ATP is bound by residues 217-219 (RDE) and Gln-226. Residue His-444 coordinates L-aspartate. Glu-474 lines the ATP pocket. Arg-481 is a binding site for L-aspartate. 526-529 (GFDR) contributes to the ATP binding site.

This sequence belongs to the class-II aminoacyl-tRNA synthetase family. Type 1 subfamily. Homodimer.

The protein localises to the cytoplasm. It catalyses the reaction tRNA(Asx) + L-aspartate + ATP = L-aspartyl-tRNA(Asx) + AMP + diphosphate. Aspartyl-tRNA synthetase with relaxed tRNA specificity since it is able to aspartylate not only its cognate tRNA(Asp) but also tRNA(Asn). Reaction proceeds in two steps: L-aspartate is first activated by ATP to form Asp-AMP and then transferred to the acceptor end of tRNA(Asp/Asn). The protein is Aspartate--tRNA(Asp/Asn) ligase of Helicobacter pylori (strain Shi470).